Consider the following 242-residue polypeptide: Biosynthetic peptidoglycan transglycosylase (242 aa).

The chain crosses the membrane as a helical span at residues 21–41 (VALVVFWGGGIALFSVVPVPF).

This sequence belongs to the glycosyltransferase 51 family.

It is found in the cell inner membrane. It carries out the reaction [GlcNAc-(1-&gt;4)-Mur2Ac(oyl-L-Ala-gamma-D-Glu-L-Lys-D-Ala-D-Ala)](n)-di-trans,octa-cis-undecaprenyl diphosphate + beta-D-GlcNAc-(1-&gt;4)-Mur2Ac(oyl-L-Ala-gamma-D-Glu-L-Lys-D-Ala-D-Ala)-di-trans,octa-cis-undecaprenyl diphosphate = [GlcNAc-(1-&gt;4)-Mur2Ac(oyl-L-Ala-gamma-D-Glu-L-Lys-D-Ala-D-Ala)](n+1)-di-trans,octa-cis-undecaprenyl diphosphate + di-trans,octa-cis-undecaprenyl diphosphate + H(+). It participates in cell wall biogenesis; peptidoglycan biosynthesis. Functionally, peptidoglycan polymerase that catalyzes glycan chain elongation from lipid-linked precursors. The protein is Biosynthetic peptidoglycan transglycosylase of Salmonella arizonae (strain ATCC BAA-731 / CDC346-86 / RSK2980).